Reading from the N-terminus, the 71-residue chain is SPbeta prophage-derived uncharacterized protein YorP (71 aa).

The sequence is that of SPbeta prophage-derived uncharacterized protein YorP (yorP) from Bacillus subtilis (strain 168).